The chain runs to 234 residues: Leucyl/phenylalanyl-tRNA--protein transferase (234 aa).

Belongs to the L/F-transferase family.

The protein localises to the cytoplasm. It carries out the reaction N-terminal L-lysyl-[protein] + L-leucyl-tRNA(Leu) = N-terminal L-leucyl-L-lysyl-[protein] + tRNA(Leu) + H(+). It catalyses the reaction N-terminal L-arginyl-[protein] + L-leucyl-tRNA(Leu) = N-terminal L-leucyl-L-arginyl-[protein] + tRNA(Leu) + H(+). The catalysed reaction is L-phenylalanyl-tRNA(Phe) + an N-terminal L-alpha-aminoacyl-[protein] = an N-terminal L-phenylalanyl-L-alpha-aminoacyl-[protein] + tRNA(Phe). Functions in the N-end rule pathway of protein degradation where it conjugates Leu, Phe and, less efficiently, Met from aminoacyl-tRNAs to the N-termini of proteins containing an N-terminal arginine or lysine. The protein is Leucyl/phenylalanyl-tRNA--protein transferase of Enterobacter sp. (strain 638).